A 121-amino-acid polypeptide reads, in one-letter code: Large ribosomal subunit protein bL19 (121 aa).

This sequence belongs to the bacterial ribosomal protein bL19 family.

Functionally, this protein is located at the 30S-50S ribosomal subunit interface and may play a role in the structure and function of the aminoacyl-tRNA binding site. The protein is Large ribosomal subunit protein bL19 of Chlamydia caviae (strain ATCC VR-813 / DSM 19441 / 03DC25 / GPIC) (Chlamydophila caviae).